Consider the following 439-residue polypeptide: Chromosomal replication initiator protein DnaA (439 aa).

The tract at residues 1–75 is domain I, interacts with DnaA modulators; the sequence is MESWSRCLER…GIREVVLAIG (75 aa). The interval 75–101 is domain II; that stretch reads GSRPKTTELTVPVDTTGRLSQTVPFNG. Residues 102-319 form a domain III, AAA+ region region; sequence NLDTHYNFDN…GALNTLVARA (218 aa). ATP-binding residues include Gly-147, Gly-149, Lys-150, and Thr-151. A domain IV, binds dsDNA region spans residues 320 to 439; it reads NFTGRAVTIE…WDKLMRKFSE (120 aa).

The protein belongs to the DnaA family. Oligomerizes as a right-handed, spiral filament on DNA at oriC.

Its subcellular location is the cytoplasm. Plays an essential role in the initiation and regulation of chromosomal replication. ATP-DnaA binds to the origin of replication (oriC) to initiate formation of the DNA replication initiation complex once per cell cycle. Binds the DnaA box (a 9 base pair repeat at the origin) and separates the double-stranded (ds)DNA. Forms a right-handed helical filament on oriC DNA; dsDNA binds to the exterior of the filament while single-stranded (ss)DNA is stabiized in the filament's interior. The ATP-DnaA-oriC complex binds and stabilizes one strand of the AT-rich DNA unwinding element (DUE), permitting loading of DNA polymerase. After initiation quickly degrades to an ADP-DnaA complex that is not apt for DNA replication. Binds acidic phospholipids. This is Chromosomal replication initiator protein DnaA from Xylella fastidiosa (strain Temecula1 / ATCC 700964).